Reading from the N-terminus, the 158-residue chain is 6,7-dimethyl-8-ribityllumazine synthase (158 aa).

5-amino-6-(D-ribitylamino)uracil contacts are provided by residues Phe-22, 57-59 (AFE), and 81-83 (AVI). 86-87 (GT) is a binding site for (2S)-2-hydroxy-3-oxobutyl phosphate. His-89 acts as the Proton donor in catalysis. Phe-114 provides a ligand contact to 5-amino-6-(D-ribitylamino)uracil. Arg-128 is a binding site for (2S)-2-hydroxy-3-oxobutyl phosphate.

Belongs to the DMRL synthase family. Forms an icosahedral capsid composed of 60 subunits, arranged as a dodecamer of pentamers.

The enzyme catalyses (2S)-2-hydroxy-3-oxobutyl phosphate + 5-amino-6-(D-ribitylamino)uracil = 6,7-dimethyl-8-(1-D-ribityl)lumazine + phosphate + 2 H2O + H(+). It participates in cofactor biosynthesis; riboflavin biosynthesis; riboflavin from 2-hydroxy-3-oxobutyl phosphate and 5-amino-6-(D-ribitylamino)uracil: step 1/2. Catalyzes the formation of 6,7-dimethyl-8-ribityllumazine by condensation of 5-amino-6-(D-ribitylamino)uracil with 3,4-dihydroxy-2-butanone 4-phosphate. This is the penultimate step in the biosynthesis of riboflavin. This is 6,7-dimethyl-8-ribityllumazine synthase from Shewanella amazonensis (strain ATCC BAA-1098 / SB2B).